A 153-amino-acid chain; its full sequence is Pheromone-binding protein Gp-9 (153 aa).

The signal sequence occupies residues 1 to 19 (MKTFVLHIFIFALVAFASA). 3 disulfides stabilise this stretch: Cys-37–Cys-77, Cys-73–Cys-129, and Cys-118–Cys-138.

It belongs to the PBP/GOBP family. As to quaternary structure, homodimer.

The protein localises to the secreted. Its function is as follows. Colony queen number, a major feature of social organization, is associated with worker genotype for Gp-9. Colonies are headed by either a single reproductive queen (monogyne form) or multiple queens (polygyne form). Differences in worker Gp-9 genotypes between social forms may cause differences in workers' abilities to recognize queens and regulate their numbers. The sequence is that of Pheromone-binding protein Gp-9 from Solenopsis sp. (strain B0-153) (Fire ant).